The sequence spans 277 residues: Probable endonuclease 4 (277 aa).

Zn(2+) is bound by residues histidine 69, histidine 109, glutamate 145, aspartate 179, histidine 182, histidine 214, aspartate 227, histidine 229, and glutamate 259.

Belongs to the AP endonuclease 2 family. It depends on Zn(2+) as a cofactor.

The enzyme catalyses Endonucleolytic cleavage to 5'-phosphooligonucleotide end-products.. Functionally, endonuclease IV plays a role in DNA repair. It cleaves phosphodiester bonds at apurinic or apyrimidinic (AP) sites, generating a 3'-hydroxyl group and a 5'-terminal sugar phosphate. The polypeptide is Probable endonuclease 4 (Bacteroides thetaiotaomicron (strain ATCC 29148 / DSM 2079 / JCM 5827 / CCUG 10774 / NCTC 10582 / VPI-5482 / E50)).